The primary structure comprises 363 residues: UDP-N-acetylglucosamine--N-acetylmuramyl-(pentapeptide) pyrophosphoryl-undecaprenol N-acetylglucosamine transferase (363 aa).

UDP-N-acetyl-alpha-D-glucosamine contacts are provided by residues 10–12 (TGG), Asn124, Ser195, Ile250, and Gln295.

Belongs to the glycosyltransferase 28 family. MurG subfamily.

Its subcellular location is the cell membrane. The catalysed reaction is di-trans,octa-cis-undecaprenyl diphospho-N-acetyl-alpha-D-muramoyl-L-alanyl-D-glutamyl-meso-2,6-diaminopimeloyl-D-alanyl-D-alanine + UDP-N-acetyl-alpha-D-glucosamine = di-trans,octa-cis-undecaprenyl diphospho-[N-acetyl-alpha-D-glucosaminyl-(1-&gt;4)]-N-acetyl-alpha-D-muramoyl-L-alanyl-D-glutamyl-meso-2,6-diaminopimeloyl-D-alanyl-D-alanine + UDP + H(+). It participates in cell wall biogenesis; peptidoglycan biosynthesis. Functionally, cell wall formation. Catalyzes the transfer of a GlcNAc subunit on undecaprenyl-pyrophosphoryl-MurNAc-pentapeptide (lipid intermediate I) to form undecaprenyl-pyrophosphoryl-MurNAc-(pentapeptide)GlcNAc (lipid intermediate II). The chain is UDP-N-acetylglucosamine--N-acetylmuramyl-(pentapeptide) pyrophosphoryl-undecaprenol N-acetylglucosamine transferase from Listeria monocytogenes serotype 4a (strain HCC23).